The primary structure comprises 354 residues: DNA polymerase IV (354 aa).

The region spanning 6–187 (IIHIDCDCFY…LPVARLHGVG (182 aa)) is the UmuC domain. Residues D10 and D105 each contribute to the Mg(2+) site. Residue E106 is part of the active site.

This sequence belongs to the DNA polymerase type-Y family. As to quaternary structure, monomer. Requires Mg(2+) as cofactor.

Its subcellular location is the cytoplasm. The enzyme catalyses DNA(n) + a 2'-deoxyribonucleoside 5'-triphosphate = DNA(n+1) + diphosphate. Poorly processive, error-prone DNA polymerase involved in untargeted mutagenesis. Copies undamaged DNA at stalled replication forks, which arise in vivo from mismatched or misaligned primer ends. These misaligned primers can be extended by PolIV. Exhibits no 3'-5' exonuclease (proofreading) activity. May be involved in translesional synthesis, in conjunction with the beta clamp from PolIII. In Pseudomonas entomophila (strain L48), this protein is DNA polymerase IV.